The chain runs to 315 residues: Olfactory receptor 5P59 (315 aa).

Residues M1 to V28 are Extracellular-facing. Residue N8 is glycosylated (N-linked (GlcNAc...) asparagine). The helical transmembrane segment at V29–I49 threads the bilayer. Topologically, residues L50–Q57 are cytoplasmic. The chain crosses the membrane as a helical span at residues L58–S78. Over S79–I102 the chain is Extracellular. Residues C100 and C193 are joined by a disulfide bond. Residues Q103 to Y123 traverse the membrane as a helical segment. The Cytoplasmic segment spans residues D124–S136. The helical transmembrane segment at T137 to L157 threads the bilayer. Residues N158 to V200 lie on the Extracellular side of the membrane. Residues L201–S221 traverse the membrane as a helical segment. The Cytoplasmic segment spans residues Y222 to A241. A helical transmembrane segment spans residues F242–I262. The Extracellular segment spans residues Y263 to N275. Residues K276–L296 traverse the membrane as a helical segment. The Cytoplasmic segment spans residues S297–S315.

Belongs to the G-protein coupled receptor 1 family.

The protein localises to the cell membrane. Functionally, potential odorant receptor. In Mus musculus (Mouse), this protein is Olfactory receptor 5P59.